The following is a 220-amino-acid chain: Ripening-related protein grip22 (220 aa).

The signal sequence occupies residues 1–27 (MAKSALVWLASVCLVFNILSLPFLALG).

Belongs to the kiwellin family. As to expression, expressed in ripening fruits.

Its subcellular location is the secreted. This Vitis vinifera (Grape) protein is Ripening-related protein grip22 (grip22).